The primary structure comprises 359 residues: Type-1 angiotensin II receptor (359 aa).

At 1 to 25 (MMLNSSTEDGIKRIQDDCPKAGRHN) the chain is on the extracellular side. A glycan (N-linked (GlcNAc...) asparagine) is linked at Asn4. Residues Gln15 and Asp17 each contribute to the angiotensin II site. 2 cysteine pairs are disulfide-bonded: Cys18/Cys274 and Cys101/Cys180. Residues 26-55 (YIFVMIPTLYSIIFVVGIFGNSLAVIVIYF) traverse the membrane as a helical segment. Over 56–61 (YMKLKT) the chain is Cytoplasmic. The chain crosses the membrane as a helical span at residues 62 to 89 (VASVFLLNLALADLCFLLTLPLWAVYTA). The Extracellular segment spans residues 90 to 98 (MEYRWPFGN). A helical transmembrane segment spans residues 99-125 (YLCKIASASVSFNLYASVFLLTCLSID). Residues 126–141 (RYLAIVHPMKSRLRRT) lie on the Cytoplasmic side of the membrane. The helical transmembrane segment at 142 to 165 (MLVAKVTCIIIWLLAGLASLPAII) threads the bilayer. Over 166–190 (HRNVFFIENTNITVCAFHYESQNST) the chain is Extracellular. Arg167 serves as a coordination point for angiotensin II. Residue Asn176 is glycosylated (N-linked (GlcNAc...) asparagine). Angiotensin II is bound by residues Phe182, His183, and Tyr184. N-linked (GlcNAc...) asparagine glycosylation is present at Asn188. Residues 191-216 (LPIGLGLTKNILGFLFPFLIILTSYT) traverse the membrane as a helical segment. Lys199 contributes to the angiotensin II binding site. Over 217 to 239 (LIWKALKKAYEIQKNKPRNDDIF) the chain is Cytoplasmic. The helical transmembrane segment at 240 to 268 (KIIMAIVLFFFFSWVPHQIFTFLDVLIQL) threads the bilayer. Residues 269-278 (GVIHDCRIAD) lie on the Extracellular side of the membrane. The helical transmembrane segment at 279–304 (IVDTAMPITICIAYFNNCLNPLFYGF) threads the bilayer. Residues 305–359 (LGKKFKKYFLQLLKYIPPKAKSHSNLSTKMSTLSYRPSDNVSSSSKKPVPCFEVE) are Cytoplasmic-facing. The span at 335–350 (STLSYRPSDNVSSSSK) shows a compositional bias: polar residues. Residues 335 to 359 (STLSYRPSDNVSSSSKKPVPCFEVE) are disordered. Cys355 carries the S-palmitoyl cysteine lipid modification.

The protein belongs to the G-protein coupled receptor 1 family. As to quaternary structure, interacts with MAS1. Interacts with ARRB1. Interacts with FLNA (via filamin repeat 21); increases PKA-mediated phosphorylation of FLNA. In terms of processing, C-terminal Ser or Thr residues may be phosphorylated.

The protein resides in the cell membrane. Functionally, receptor for angiotensin II, a vasoconstricting peptide, which acts as a key regulator of blood pressure and sodium retention by the kidney. The activated receptor in turn couples to G-alpha proteins G(q) (GNAQ, GNA11, GNA14 or GNA15) and thus activates phospholipase C and increases the cytosolic Ca(2+) concentrations, which in turn triggers cellular responses such as stimulation of protein kinase C. The chain is Type-1 angiotensin II receptor (AGTR1) from Oryctolagus cuniculus (Rabbit).